A 361-amino-acid polypeptide reads, in one-letter code: MTLMFTSRTAVYCSNLTTQRSAVTILRTLSGTASNGIKSRSALTAYQQNPSLRTRNFHSTSVVQAKDFFPEPDTPHIKKTKTAWPHPIYTVEQMNQVAVAHRDTRNWSDKVALIAVKLLRWGLDTVSGYKHGKAQALHAQDPQEAQKRYGMTGKQYLVRNVFLESVAGVPGMVAGMLRHLHSMRRMKRDHGWIETLLEESYNERMHLLIFLKLYEPGWFMRLAVLGAQGVFFNAMFLSYLISPRTCHRFVGYLEEEAVVTYTRELADLEAGKLPEWETLAAPDIAVDYYNLPEGHRTMKDLLLHVRADEAKHREVNHTLGNLDQNSDPNPYASKYDNPNVPHPRKDIKYLKPSGWEREEVM.

A helical membrane pass occupies residues 156-178; sequence YLVRNVFLESVAGVPGMVAGMLR. Fe cation is bound by residues glutamate 164, glutamate 203, and histidine 206. A helical transmembrane segment spans residues 218 to 240; that stretch reads WFMRLAVLGAQGVFFNAMFLSYL. The Fe cation site is built by glutamate 254, glutamate 309, and histidine 312. Residues 318–328 show a composition bias toward polar residues; the sequence is TLGNLDQNSDP. Residues 318 to 361 are disordered; it reads TLGNLDQNSDPNPYASKYDNPNVPHPRKDIKYLKPSGWEREEVM. The segment covering 343–361 has biased composition (basic and acidic residues); it reads PRKDIKYLKPSGWEREEVM.

The protein belongs to the alternative oxidase family. The cofactor is Fe cation.

The protein localises to the mitochondrion inner membrane. Catalyzes cyanide-resistant oxygen consumption. May increase respiration when the cytochrome respiratory pathway is restricted, or in response to low temperatures. The sequence is that of Alternative oxidase, mitochondrial (AOX1) from Venturia inaequalis (Apple scab fungus).